The primary structure comprises 199 residues: Ubiquitin-conjugating enzyme E2-22 kDa (199 aa).

Residues 4–154 (MAVSRIKREF…AKHWTNAYAG (151 aa)) form the UBC core domain. Cysteine 92 serves as the catalytic Glycyl thioester intermediate. Residues 161-199 (DCDSKIQRLRDMGIDEHEARAVLSKENWNLEKATEGLFS) form the UBA domain.

The protein belongs to the ubiquitin-conjugating enzyme family. Interacts with Rpn10. During gastrulation, expression is highest in the invaginating posterior midgut primordium (PMG), high expression is also observed in the cephalic furrow and ventral ectodermal neurogenic region. In stage 10-11 embryos, expression is high in the pole cells present in the pocket formed by the PMG. During germ band retraction, expression appears to reinitiate in many tissues, especially the gut and nervous system. After dorsal closure, expression is detectable at low levels throughout the embryo.

It catalyses the reaction S-ubiquitinyl-[E1 ubiquitin-activating enzyme]-L-cysteine + [E2 ubiquitin-conjugating enzyme]-L-cysteine = [E1 ubiquitin-activating enzyme]-L-cysteine + S-ubiquitinyl-[E2 ubiquitin-conjugating enzyme]-L-cysteine.. The protein operates within protein modification; protein ubiquitination. Functionally, catalyzes the covalent attachment of ubiquitin to other proteins. This Drosophila melanogaster (Fruit fly) protein is Ubiquitin-conjugating enzyme E2-22 kDa.